The sequence spans 347 residues: Protein RecA (347 aa).

Residue 66–73 (GPESSGKT) participates in ATP binding. Positions 328 to 347 (MPKPNAPKATDEALDETGTD) are disordered.

The protein belongs to the RecA family.

It is found in the cytoplasm. Its function is as follows. Can catalyze the hydrolysis of ATP in the presence of single-stranded DNA, the ATP-dependent uptake of single-stranded DNA by duplex DNA, and the ATP-dependent hybridization of homologous single-stranded DNAs. It interacts with LexA causing its activation and leading to its autocatalytic cleavage. The chain is Protein RecA from Hydrogenovibrio crunogenus (strain DSM 25203 / XCL-2) (Thiomicrospira crunogena).